We begin with the raw amino-acid sequence, 81 residues long: Beta-catenin-interacting protein 1 (81 aa).

At S59 the chain carries Phosphoserine.

Belongs to the CTNNBIP1 family. In terms of assembly, binds CTNNB1.

The protein localises to the cytoplasm. It is found in the nucleus. Functionally, prevents the interaction between CTNNB1 and TCF family members, and acts as a negative regulator of the Wnt signaling pathway. The polypeptide is Beta-catenin-interacting protein 1 (CTNNBIP1) (Homo sapiens (Human)).